A 393-amino-acid polypeptide reads, in one-letter code: S-adenosylmethionine synthase 1 (393 aa).

A Mg(2+)-binding site is contributed by Glu-9. His-15 is a binding site for ATP. Glu-43 is a K(+) binding site. L-methionine-binding residues include Glu-56 and Gln-99. Residue Cys-114 is modified to S-nitrosocysteine. Residues 167–169, 235–238, Asp-246, 252–253, Ala-269, Lys-273, and Lys-277 contribute to the ATP site; these read DGK, SGRF, and RK. Residue Asp-246 participates in L-methionine binding. Position 277 (Lys-277) interacts with L-methionine.

The protein belongs to the AdoMet synthase family. As to quaternary structure, homotetramer. Interacts with GRF3. The cofactor is Mn(2+). Mg(2+) serves as cofactor. Requires Co(2+) as cofactor. It depends on K(+) as a cofactor. In terms of processing, S-nitrosylated in the presence of NO. The inhibition of SAM1 activity by S-nitrosylation could contribute to the cross-talk between ethylene and NO signaling. Highly expressed in stems and roots.

Its subcellular location is the cytoplasm. The enzyme catalyses L-methionine + ATP + H2O = S-adenosyl-L-methionine + phosphate + diphosphate. It functions in the pathway amino-acid biosynthesis; S-adenosyl-L-methionine biosynthesis; S-adenosyl-L-methionine from L-methionine: step 1/1. Its activity is regulated as follows. Reversibly inhibited by NO. Inhibited by 5,5'-dithiobis-2-nitrobenzoic acid (DTNB) and N-ethylmaleimide (NEM) (in vitro). Functionally, catalyzes the formation of S-adenosylmethionine from methionine and ATP. The reaction comprises two steps that are both catalyzed by the same enzyme: formation of S-adenosylmethionine (AdoMet) and triphosphate, and subsequent hydrolysis of the triphosphate. In Arabidopsis thaliana (Mouse-ear cress), this protein is S-adenosylmethionine synthase 1 (SAM1).